Reading from the N-terminus, the 255-residue chain is Proteasome subunit alpha 2 (255 aa).

The segment at 229–255 is disordered; that stretch reads AGSSLEEMLPTPAATEDAPPANGDAPS. Over residues 238–249 the composition is skewed to low complexity; sequence PTPAATEDAPPA.

This sequence belongs to the peptidase T1A family. The 20S proteasome core is composed of 14 alpha and 14 beta subunits that assemble into four stacked heptameric rings, resulting in a barrel-shaped structure. The two inner rings, each composed of seven catalytic beta subunits, are sandwiched by two outer rings, each composed of seven alpha subunits. All four combinations of alpha- and beta-subunits (beta2-alpha1, beta2-alpha2, beta1-alpha2 and beta1-alpha1) yield fully assembled and proteolytically active proteasomes. The catalytic chamber with the active sites is on the inside of the barrel. Has probably a gated structure, the ends of the cylinder being occluded by the N-termini of the alpha-subunits. Is likely capped by the proteasome-associated ATPase, ARC. The N-terminus is blocked.

The protein localises to the cytoplasm. The protein operates within protein degradation; proteasomal Pup-dependent pathway. The formation of the proteasomal ATPase ARC-20S proteasome complex, likely via the docking of the C-termini of ARC into the intersubunit pockets in the alpha-rings, may trigger opening of the gate for substrate entry. Interconversion between the open-gate and close-gate conformations leads to a dynamic regulation of the 20S proteasome proteolysis activity. Its function is as follows. Component of the proteasome core, a large protease complex with broad specificity involved in protein degradation. The R.erythropolis proteasomes are able to cleave oligopeptides after Tyr, Phe and Leu, very poorly after Arg but not after Glu. Thus, displays chymotrypsin-like activity, low trypsin-like activity but no caspase-like activity. This chain is Proteasome subunit alpha 2, found in Rhodococcus erythropolis (Arthrobacter picolinophilus).